The following is a 507-amino-acid chain: ATP synthase subunit alpha, chloroplastic (507 aa).

170-177 (GDRQTGKT) serves as a coordination point for ATP. T257 carries the phosphothreonine modification.

It belongs to the ATPase alpha/beta chains family. F-type ATPases have 2 components, CF(1) - the catalytic core - and CF(0) - the membrane proton channel. CF(1) has five subunits: alpha(3), beta(3), gamma(1), delta(1), epsilon(1). CF(0) has four main subunits: a, b, b' and c.

The protein localises to the plastid. It localises to the chloroplast thylakoid membrane. The enzyme catalyses ATP + H2O + 4 H(+)(in) = ADP + phosphate + 5 H(+)(out). Functionally, produces ATP from ADP in the presence of a proton gradient across the membrane. The alpha chain is a regulatory subunit. The chain is ATP synthase subunit alpha, chloroplastic from Arabis hirsuta (Hairy rock-cress).